We begin with the raw amino-acid sequence, 528 residues long: Importin subunit alpha-7 (528 aa).

In terms of domain architecture, IBB spans 1–56 (MKGGETMSVRRSGYKAVVDGVGGRRRREDDMVEIRKAKREESLLKKRREALPHSPS). ARM repeat units lie at residues 93–133 (NVRV…NIAS), 136–175 (SENT…NISG), 178–218 (PRCR…NLCR), 220–259 (KPQP…YLSD), 262–301 (NEKI…NIVT), 304–344 (DSQT…NITA), 347–386 (QSQI…NAIA), and 390–429 (YKQI…KILK).

Belongs to the importin alpha family. As to quaternary structure, forms a complex with importin subunit beta-1.

Its subcellular location is the nucleus envelope. Functionally, binds to conventional NLS motifs and mediates nuclear protein import across the nuclear envelope. Acts as a cellular receptor for the nuclear import of the virD2 protein of Agrobacterium, but is not essential for Agrobacterium-mediated root transformation. In Arabidopsis thaliana (Mouse-ear cress), this protein is Importin subunit alpha-7.